The primary structure comprises 95 residues: Protein TusB (95 aa).

Belongs to the DsrH/TusB family. As to quaternary structure, heterohexamer, formed by a dimer of trimers. The hexameric TusBCD complex contains 2 copies each of TusB, TusC and TusD. The TusBCD complex interacts with TusE.

Its subcellular location is the cytoplasm. In terms of biological role, part of a sulfur-relay system required for 2-thiolation of 5-methylaminomethyl-2-thiouridine (mnm(5)s(2)U) at tRNA wobble positions. The protein is Protein TusB of Escherichia coli O157:H7.